Reading from the N-terminus, the 287-residue chain is MELIIISGRSGAGKSVALRALEDIGYYCVDNLPIDLLPQLADILSQSQASAAISLDIRNLPNSSQHLDEILTELENKHQIKIIFLDADRSTLIRRYSDSRRLHPLSVQNQDLSLEAAIDAEQIQLDPLIQHANLIIDTAVLSTHELAERLREFLRGNSDKELKIVVESFGFKYGLPLDADYVFDVRFLPNPHWNPSLRPMTGLEQPVIDFLSKYEDVANFIYTTRNYIETWLPMLERNNRSYLTIAIGCTGGKHRSVYIAQQLGEYFQDKGKHVKIQHKSLEKHKNR.

Position 8–15 (8–15 (GRSGAGKS)) interacts with ATP. GTP is bound at residue 56–59 (DIRN).

Belongs to the RapZ-like family.

Its function is as follows. Displays ATPase and GTPase activities. This chain is Nucleotide-binding protein Asuc_0930, found in Actinobacillus succinogenes (strain ATCC 55618 / DSM 22257 / CCUG 43843 / 130Z).